Consider the following 31-residue polypeptide: Cytochrome b6-f complex subunit 6 (31 aa).

A helical transmembrane segment spans residues 4 to 24 (ITSYFGFLLAALTITSALFIG).

Belongs to the PetL family. In terms of assembly, the 4 large subunits of the cytochrome b6-f complex are cytochrome b6, subunit IV (17 kDa polypeptide, PetD), cytochrome f and the Rieske protein, while the 4 small subunits are PetG, PetL, PetM and PetN. The complex functions as a dimer.

It is found in the plastid. Its subcellular location is the chloroplast thylakoid membrane. Component of the cytochrome b6-f complex, which mediates electron transfer between photosystem II (PSII) and photosystem I (PSI), cyclic electron flow around PSI, and state transitions. PetL is important for photoautotrophic growth as well as for electron transfer efficiency and stability of the cytochrome b6-f complex. The protein is Cytochrome b6-f complex subunit 6 of Hamamelis virginiana (Witch-hazel).